We begin with the raw amino-acid sequence, 115 residues long: Histidine-rich carboxyl terminus protein 1 (115 aa).

A helical membrane pass occupies residues 9-29 (ALVGWITGAAVAVLLLLLLLA). A disordered region spans residues 86–115 (GLHHHHHPRHTPHHLHHHHHPHRHHPRHAR). Positions 87 to 115 (LHHHHHPRHTPHHLHHHHHPHRHHPRHAR) are enriched in basic residues.

It is found in the membrane. The polypeptide is Histidine-rich carboxyl terminus protein 1 (HRCT1) (Homo sapiens (Human)).